Consider the following 352-residue polypeptide: Nuclear receptor subfamily 1 group I member 3 (352 aa).

Positions 8-83 (LRNCVVCGDQ…AGMRKDMILS (76 aa)) form a DNA-binding region, nuclear receptor. The segment at 11 to 31 (CVVCGDQATGYHFNALTCEGC) adopts an NR C4-type zinc-finger fold. Residue Thr-38 is modified to Phosphothreonine; by PKC. The segment at 47 to 71 (CPFAGSCEVSKIQRRHCPACRLQKC) adopts an NR C4-type zinc-finger fold. Residues 109–352 (EQEELIQTLL…MMPLLQEICS (244 aa)) enclose the NR LBD domain.

Belongs to the nuclear hormone receptor family. NR1 subfamily. Heterodimer of NR1I3 and RXR. Interacts with PSMC4. Interacts with ECT2. Directly interacts with DNAJC7; this complex may also include HSP90. Interacts with CRY1. Interacts with CRY2 in a ligand-dependent manner. In terms of processing, phosphorylated at Thr-38 by PKC, dephosphorylation of Thr-38 is required for nuclear translocation and activation.

The protein resides in the nucleus. It is found in the cytoplasm. The protein localises to the cytoskeleton. Its function is as follows. Binds and transactivates the retinoic acid response elements that control expression of the retinoic acid receptor beta 2 and alcohol dehydrogenase 3 genes. Transactivates both the phenobarbital responsive element module of the human CYP2B6 gene and the CYP3A4 xenobiotic response element. This chain is Nuclear receptor subfamily 1 group I member 3 (NR1I3), found in Macaca mulatta (Rhesus macaque).